The following is a 641-amino-acid chain: Sodium-dependent nutrient amino acid transporter 1 (641 aa).

The interval 1-34 is disordered; sequence MELKGVQPSNGSANGNGTTNAASTEKADTEKQTA. The Cytoplasmic segment spans residues 1–38; the sequence is MELKGVQPSNGSANGNGTTNAASTEKADTEKQTAERTN. The span at 9–24 shows a compositional bias: low complexity; it reads SNGSANGNGTTNAAST. The span at 25 to 34 shows a compositional bias: basic and acidic residues; that stretch reads EKADTEKQTA. A run of 3 helical transmembrane segments spans residues 39-59, 72-92, and 109-129; these read WGNG…LGNV, GAFL…MYYL, and SVVP…ICII. N-linked (GlcNAc...) asparagine glycans are attached at residues N183 and N188. A run of 9 helical transmembrane segments spans residues 229–249, 258–278, 307–327, 341–361, 401–421, 441–461, 474–494, 516–536, and 552–572; these read PDWK…LVIM, AAYF…IRAV, AVVQ…MFAS, IVTT…FAIL, LFSV…IVAL, VALI…TPGG, TYVV…VYGL, CWSF…MATI, and IAGW…GLWY.

It belongs to the sodium:neurotransmitter symporter (SNF) (TC 2.A.22) family.

It localises to the membrane. In terms of biological role, unusual broad substrate spectrum amino acid:sodium cotransporter that promotes absorption of the D isomers of essential amino acids. Neutral amino acids are the preferred substrates, especially methionine and phenylalanine. The polypeptide is Sodium-dependent nutrient amino acid transporter 1 (Drosophila yakuba (Fruit fly)).